A 287-amino-acid polypeptide reads, in one-letter code: ATP synthase subunit a (287 aa).

6 helical membrane passes run 37-57 (LDSVAVSVILGVLGLFVMWLA), 96-116 (FIAPLALTVFVWIFLMNAMDL), 144-164 (DLSTTLGLSSAVLILCFVYSI), 187-207 (PVFALILGVVNLLMQIIEYVA), 224-244 (ELVFMLIALMGGAAAMSLSGV), and 266-286 (TLQAFIFMMLTLIYLGQAHEA).

It belongs to the ATPase A chain family. As to quaternary structure, F-type ATPases have 2 components, CF(1) - the catalytic core - and CF(0) - the membrane proton channel. CF(1) has five subunits: alpha(3), beta(3), gamma(1), delta(1), epsilon(1). CF(0) has three main subunits: a(1), b(2) and c(9-12). The alpha and beta chains form an alternating ring which encloses part of the gamma chain. CF(1) is attached to CF(0) by a central stalk formed by the gamma and epsilon chains, while a peripheral stalk is formed by the delta and b chains.

The protein resides in the cell inner membrane. Key component of the proton channel; it plays a direct role in the translocation of protons across the membrane. The chain is ATP synthase subunit a from Acidovorax ebreus (strain TPSY) (Diaphorobacter sp. (strain TPSY)).